Here is a 176-residue protein sequence, read N- to C-terminus: Adenine phosphoribosyltransferase (176 aa).

The protein belongs to the purine/pyrimidine phosphoribosyltransferase family. As to quaternary structure, homodimer.

It is found in the cytoplasm. The enzyme catalyses AMP + diphosphate = 5-phospho-alpha-D-ribose 1-diphosphate + adenine. The protein operates within purine metabolism; AMP biosynthesis via salvage pathway; AMP from adenine: step 1/1. In terms of biological role, catalyzes a salvage reaction resulting in the formation of AMP, that is energically less costly than de novo synthesis. The protein is Adenine phosphoribosyltransferase of Borreliella afzelii (strain PKo) (Borrelia afzelii).